The primary structure comprises 109 residues: Cell division suppressor protein YneA (109 aa).

The LysM domain occupies serine 39–isoleucine 90.

The protein belongs to the YneA family.

It localises to the cytoplasm. Its function is as follows. Inhibits cell division during the SOS response. Affects a later stage of the cell division protein assembly, after the assembly of the Z ring, by probably suppressing recruitment of FtsL and/or DivIC to the division machinery. The protein is Cell division suppressor protein YneA of Listeria monocytogenes serovar 1/2a (strain ATCC BAA-679 / EGD-e).